Here is a 158-residue protein sequence, read N- to C-terminus: Troponin C, isoform 1 (158 aa).

Ser1 is subject to N-acetylserine. 4 EF-hand domains span residues 15–50 (EQIV…MGIK), 51–86 (VSST…FLIE), 91–126 (AMMK…LDAR), and 127–158 (LTAE…MMTG). The Ca(2+) site is built by Asp64, Asp66, Ser68, Gln70, and Glu75. The Ca(2+) site is built by Asp140, Asp142, Ser144, Thr146, and Glu151.

Belongs to the troponin C family.

In terms of biological role, troponin is the central regulatory protein of striated muscle contraction. Tn consists of three components: Tn-I which is the inhibitor of actomyosin ATPase, Tn-T which contains the binding site for tropomyosin and Tn-C. The binding of calcium to Tn-C abolishes the inhibitory action of Tn on actin filaments. The sequence is that of Troponin C, isoform 1 from Balanus nubilus (Giant acorn barnacle).